The chain runs to 397 residues: L-aspartate--L-methionine ligase (397 aa).

In terms of domain architecture, ATP-grasp spans 131 to 347; sequence VALNNKARIP…FFNTILKYVK (217 aa). Residues Lys-136, Val-171, Lys-173, Gly-183, Val-186, Ile-188, Glu-215, Gln-216, Ile-218, Asn-223, and Thr-246 each coordinate ADP. Asp-288 contacts Mg(2+). Leu-290 and Ile-300 together coordinate ADP. Asp-301 provides a ligand contact to Mg(2+). Arg-305 functions as the Critical for catalysis in the catalytic mechanism.

In terms of assembly, primarily a monomer in solution. Minor homodimer formation. It depends on Mg(2+) as a cofactor.

The catalysed reaction is L-aspartate + L-methionine + ATP = L-aspartyl-L-methionine + ADP + phosphate + H(+). It participates in amino-acid metabolism. Functionally, L-amino acid ligase, which preferentially catalyzes the formation of L-aspartyl-L-methionine dipeptide from L-aspartate and L-methionine in the presence of ATP. Less active with L-asparagine and L-methionine as substrates. Less active with L-aspartate and either L-phenylalanine, L-valine, L-leucine or L-isoleucine as substrates. Decreased activity when L-methionine is substituted with seleno-DL-methionine, L-homocysteine, L-methionine sulfoxide, L-methionine sulfoximine and o-acetyl-L-serine. Decreased activity with acetylation of L-methionine amino group. Decreased activity by modification of L-methionine carboxylate to L-methionine methyl ester. No activity when L-methionine is substituted with L-homoserine. No activity with formylation of L-methionine amino group. No activity by modification of L-methionine carboxylate to L-methionine-glycine carboxylate. No activity when L-aspartate substrate is replaced by analogs such as L-homoserine, DL-aspartate beta-methyl ester, L-glutamate or o-acetyl-L-serine. No activity when L-aspartate amino and alpha-carboxylate groups are modified to L-malate, glycine-L-aspartate, L-aspartate-glycine or N-carbamoyl-DL-aspartate. No activity with L-methionine or L-aspartate as sole substrates. No activity in presence of other nucleoside triphosphates including GTP, CTP, UTP, TTP or ITP. Involved in sulfur amino acid metabolism. In Staphylococcus aureus (strain NCTC 8325 / PS 47), this protein is L-aspartate--L-methionine ligase.